Consider the following 361-residue polypeptide: MGNVLAASSPPAGPPPPPAPALVGLPPPPPSPPGFTLPPLGGSLGAGTSTSRSSERTPGAATASASGAAEDGACGCLPNPGTFEECHRKCKELFPIQMEGVKLTVNKGLSNHFQVNHTVALSTIGESNYHFGVTYVGTKQLSPTEAFPVLVGDMDNSGSLNAQVIHQLGPGLRSKMAIQTQQSKFVNWQVDGEYRGSDFTAAVTLGNPDVLVGSGILVAHYLQSITPCLALGGELVYHRRPGEEGTVMSLAGKYTLNNWLATVTLGQAGMHATYYHKASDQLQVGVEFEASTRMQDTSVSFGYQLDLPKANLLFKGSVDSNWIVGATLEKKLPPLPLTLALGAFLNHRKNKFQCGFGLTIG.

Residues 1-10 (MGNVLAASSP) are compositionally biased toward low complexity. The tract at residues 1 to 71 (MGNVLAASSP…TASASGAAED (71 aa)) is disordered. Residues 11-36 (PAGPPPPPAPALVGLPPPPPSPPGFT) show a composition bias toward pro residues. 2 stretches are compositionally biased toward low complexity: residues 37–52 (LPPL…STSR) and 59–71 (GAAT…AAED).

The protein belongs to the Tom40 family. In terms of assembly, forms part of the preprotein translocase complex of the outer mitochondrial membrane (TOM complex) which consists of at least 7 different proteins (TOMM5, TOMM6, TOMM7, TOMM20, TOMM22, TOMM40 and TOMM70). Interacts with mitochondrial targeting sequences. Interacts with TIMM29; linking the TIM22 complex to the TOM complex. Forms a complex with BCAP31 (via C-terminus) which mediates the translocation of components of the mitochondrial membrane respiratory chain NADH dehydrogenase (Complex I) from the cytosol to the mitochondria. Interacts (via N-terminus) with CYP1A1 (via mitochondrial targeting signal); this interaction is required for CYP1A1 translocation across the mitochondrial outer membrane.

It localises to the mitochondrion outer membrane. Functionally, channel-forming protein essential for import of protein precursors into mitochondria. Plays a role in the assembly of the mitochondrial membrane respiratory chain NADH dehydrogenase (Complex I) by forming a complex with BCAP31 and mediating the translocation of Complex I components from the cytosol to the mitochondria. The chain is Mitochondrial import receptor subunit TOM40 homolog (TOMM40) from Homo sapiens (Human).